A 368-amino-acid chain; its full sequence is Probable replication factor C subunit 5 (368 aa).

Gly-69–Thr-76 contributes to the ATP binding site.

The protein belongs to the activator 1 small subunits family. In terms of assembly, heteropentamer of various rfc subunits that forms a complex (RFC) with PCNA in the presence of ATP.

Its subcellular location is the nucleus. Functionally, the elongation of primed DNA templates by DNA polymerase delta and epsilon requires the action of the accessory proteins proliferating cell nuclear antigen (PCNA) and activator 1. The polypeptide is Probable replication factor C subunit 5 (Caenorhabditis elegans).